Here is a 341-residue protein sequence, read N- to C-terminus: S-adenosylmethionine:tRNA ribosyltransferase-isomerase (341 aa).

The protein belongs to the QueA family. Monomer.

Its subcellular location is the cytoplasm. The catalysed reaction is 7-aminomethyl-7-carbaguanosine(34) in tRNA + S-adenosyl-L-methionine = epoxyqueuosine(34) in tRNA + adenine + L-methionine + 2 H(+). It functions in the pathway tRNA modification; tRNA-queuosine biosynthesis. Functionally, transfers and isomerizes the ribose moiety from AdoMet to the 7-aminomethyl group of 7-deazaguanine (preQ1-tRNA) to give epoxyqueuosine (oQ-tRNA). This chain is S-adenosylmethionine:tRNA ribosyltransferase-isomerase, found in Citrifermentans bemidjiense (strain ATCC BAA-1014 / DSM 16622 / JCM 12645 / Bem) (Geobacter bemidjiensis).